The chain runs to 239 residues: Pyridoxine 5'-phosphate synthase (239 aa).

A 3-amino-2-oxopropyl phosphate-binding site is contributed by asparagine 7. Position 9–10 (9–10) interacts with 1-deoxy-D-xylulose 5-phosphate; that stretch reads DH. Arginine 18 provides a ligand contact to 3-amino-2-oxopropyl phosphate. Histidine 43 functions as the Proton acceptor in the catalytic mechanism. 2 residues coordinate 1-deoxy-D-xylulose 5-phosphate: arginine 45 and histidine 50. The active-site Proton acceptor is glutamate 70. 1-deoxy-D-xylulose 5-phosphate is bound at residue threonine 100. The active-site Proton donor is histidine 191. Residues glycine 192 and 213–214 each bind 3-amino-2-oxopropyl phosphate; that span reads GH.

Belongs to the PNP synthase family. As to quaternary structure, homooctamer; tetramer of dimers.

Its subcellular location is the cytoplasm. The catalysed reaction is 3-amino-2-oxopropyl phosphate + 1-deoxy-D-xylulose 5-phosphate = pyridoxine 5'-phosphate + phosphate + 2 H2O + H(+). It functions in the pathway cofactor biosynthesis; pyridoxine 5'-phosphate biosynthesis; pyridoxine 5'-phosphate from D-erythrose 4-phosphate: step 5/5. In terms of biological role, catalyzes the complicated ring closure reaction between the two acyclic compounds 1-deoxy-D-xylulose-5-phosphate (DXP) and 3-amino-2-oxopropyl phosphate (1-amino-acetone-3-phosphate or AAP) to form pyridoxine 5'-phosphate (PNP) and inorganic phosphate. This is Pyridoxine 5'-phosphate synthase from Syntrophotalea carbinolica (strain DSM 2380 / NBRC 103641 / GraBd1) (Pelobacter carbinolicus).